A 616-amino-acid polypeptide reads, in one-letter code: Pentatricopeptide repeat-containing protein At4g15720 (616 aa).

10 PPR repeats span residues 63–93 (DTFTVNHLVISYVKLKEINTARKLFDEMCEP), 94–128 (NVVSWTSVISGYNDMGKPQNALSMFQKMHEDRPVP), 130–164 (NEYTFASVFKACSALAESRIGKNIHARLEISGLRR), 165–199 (NIVVSSSLVDMYGKCNDVETARRVFDSMIGYGRNV), 200–228 (VSWTSMITAYAQNARGHEAIELFRSFNAA), 235–269 (NQFMLASVISACSSLGRLQWGKVAHGLVTRGGYES), 270–300 (NTVVATSLLDMYAKCGSLSCAEKIFLRIRCH), 301–335 (SVISYTSMIMAKAKHGLGEAAVKLFDEMVAGRINP), 336–371 (NYVTLLGVLHACSHSGLVNEGLEYLSLMAEKYGVVP), and 372–402 (DSRHYTCVVDMLGRFGRVDEAYELAKTIEVG). The tract at residues 409–484 (LWGALLSAGR…ERACSWIENK (76 aa)) is type E motif. The tract at residues 485 to 515 (DSVYVFHAGDLSCDESGEIERFLKDLEKRMK) is type E(+) motif. The type DYW motif stretch occupies residues 522–616 (SSSMITTSSS…NGSCTCRDYW (95 aa)).

The protein belongs to the PPR family. PCMP-H subfamily.

The protein is Pentatricopeptide repeat-containing protein At4g15720 (PCMP-H1) of Arabidopsis thaliana (Mouse-ear cress).